The chain runs to 431 residues: Gamma-glutamyl phosphate reductase (431 aa).

The protein belongs to the gamma-glutamyl phosphate reductase family.

The protein localises to the cytoplasm. The catalysed reaction is L-glutamate 5-semialdehyde + phosphate + NADP(+) = L-glutamyl 5-phosphate + NADPH + H(+). The protein operates within amino-acid biosynthesis; L-proline biosynthesis; L-glutamate 5-semialdehyde from L-glutamate: step 2/2. In terms of biological role, catalyzes the NADPH-dependent reduction of L-glutamate 5-phosphate into L-glutamate 5-semialdehyde and phosphate. The product spontaneously undergoes cyclization to form 1-pyrroline-5-carboxylate. The chain is Gamma-glutamyl phosphate reductase from Methylobacterium nodulans (strain LMG 21967 / CNCM I-2342 / ORS 2060).